The sequence spans 292 residues: Acetyl-coenzyme A carboxylase carboxyl transferase subunit beta (292 aa).

One can recognise a CoA carboxyltransferase N-terminal domain in the interval 36-292 (MWSKCEKCAK…LLRMHEVDYE (257 aa)). Zn(2+) is bound by residues C40, C43, C59, and C62. The C4-type zinc-finger motif lies at 40–62 (CEKCAKILYTEDLRENFNVCPNC).

This sequence belongs to the AccD/PCCB family. In terms of assembly, acetyl-CoA carboxylase is a heterohexamer composed of biotin carboxyl carrier protein (AccB), biotin carboxylase (AccC) and two subunits each of ACCase subunit alpha (AccA) and ACCase subunit beta (AccD). It depends on Zn(2+) as a cofactor.

The protein localises to the cytoplasm. The catalysed reaction is N(6)-carboxybiotinyl-L-lysyl-[protein] + acetyl-CoA = N(6)-biotinyl-L-lysyl-[protein] + malonyl-CoA. It functions in the pathway lipid metabolism; malonyl-CoA biosynthesis; malonyl-CoA from acetyl-CoA: step 1/1. In terms of biological role, component of the acetyl coenzyme A carboxylase (ACC) complex. Biotin carboxylase (BC) catalyzes the carboxylation of biotin on its carrier protein (BCCP) and then the CO(2) group is transferred by the transcarboxylase to acetyl-CoA to form malonyl-CoA. This is Acetyl-coenzyme A carboxylase carboxyl transferase subunit beta from Clostridium perfringens (strain 13 / Type A).